The following is a 679-amino-acid chain: Probable metal-nicotianamine transporter YSL18 (679 aa).

Positions 1 to 17 (MESVGDPRDGPSTERAF) are enriched in basic and acidic residues. The tract at residues 1 to 21 (MESVGDPRDGPSTERAFEGQP) is disordered. A run of 14 helical transmembrane segments spans residues 29–49 (VTLR…SVMM), 51–71 (LVFT…LGFF), 101–121 (CVVA…LLAM), 144–164 (FGRM…AIVP), 211–231 (LASL…NCGF), 255–275 (VGIG…GSII), 309–329 (VFCA…AISL), 379–399 (FAIS…PLMY), 407–427 (VAAA…GTGV), 441–461 (ILMF…SLVI), 497–517 (VIGT…FHHF), 547–567 (LPKY…AVCA), 593–613 (FLLV…VFLW), and 627–647 (VLAS…ALLA).

This sequence belongs to the YSL (TC 2.A.67.2) family.

It is found in the membrane. May be involved in the transport of nicotianamine-chelated metals. This is Probable metal-nicotianamine transporter YSL18 (YSL18) from Oryza sativa subsp. japonica (Rice).